The following is a 1184-amino-acid chain: Non-receptor tyrosine-protein kinase TYK2 (1184 aa).

Residues 33 to 430 enclose the FERM domain; that stretch reads LMVLLHWPGP…GYFRLTADSS (398 aa). The tract at residues 294–368 is disordered; it reads CYIQNSGQTA…KAGEHLTESP (75 aa). A Phosphotyrosine modification is found at Tyr-295. An SH2; atypical domain is found at 449-529; that stretch reads GIHGPLMDPF…GRSFASLGDL (81 aa). Ser-525 is subject to Phosphoserine. In terms of domain architecture, Protein kinase 1 spans 589-866; it reads ITQLSHLGQG…RTILRDLTRL (278 aa). Tyr-604 is modified (phosphotyrosine). A Phosphoserine modification is found at Ser-881. One can recognise a Protein kinase 2 domain in the interval 894–1166; that stretch reads LKKIRDLGEG…PTFQNLVPIL (273 aa). ATP-binding positions include 900–908 and Lys-927; that span reads LGEGHFGKV. Asp-1020 functions as the Proton acceptor in the catalytic mechanism. At Tyr-1051 the chain carries Phosphotyrosine; by autocatalysis. Tyr-1052 is subject to Phosphotyrosine.

This sequence belongs to the protein kinase superfamily. Tyr protein kinase family. JAK subfamily. Interacts (via FERM domain) with JAKMIP1. Interacts with PIK3R1; this interaction is important for cell migration. Interacts with MPL/TPOR. Post-translationally, phosphorylation by JAK1 at Tyr-1051 and Tyr-1052 induces kinase activation.

The enzyme catalyses L-tyrosyl-[protein] + ATP = O-phospho-L-tyrosyl-[protein] + ADP + H(+). With respect to regulation, the protein kinase 1 domain (also termed pseudokinase domain) mediates autoinhibition of the TYK2 kinase domain. Tyrosine kinase of the non-receptor type involved in numerous cytokines and interferons signaling, which regulates cell growth, development, cell migration, innate and adaptive immunity. Plays both structural and catalytic roles in numerous interleukins and interferons (IFN-alpha/beta) signaling. Associates with heterodimeric cytokine receptor complexes and activates STAT family members including STAT1, STAT3, STAT4 or STAT6. The heterodimeric cytokine receptor complexes are composed of (1) a TYK2-associated receptor chain (IFNAR1, IL12RB1, IL10RB or IL13RA1), and (2) a second receptor chain associated either with JAK1 or JAK2. In response to cytokine-binding to receptors, phosphorylates and activates receptors (IFNAR1, IL12RB1, IL10RB or IL13RA1), creating docking sites for STAT members. In turn, recruited STATs are phosphorylated by TYK2 (or JAK1/JAK2 on the second receptor chain), form homo- and heterodimers, translocate to the nucleus, and regulate cytokine/growth factor responsive genes. Negatively regulates STAT3 activity by promototing phosphorylation at a specific tyrosine that differs from the site used for signaling. This Mus musculus (Mouse) protein is Non-receptor tyrosine-protein kinase TYK2.